Consider the following 63-residue polypeptide: Large ribosomal subunit protein bL28 (63 aa).

It belongs to the bacterial ribosomal protein bL28 family.

This is Large ribosomal subunit protein bL28 from Syntrophotalea carbinolica (strain DSM 2380 / NBRC 103641 / GraBd1) (Pelobacter carbinolicus).